The sequence spans 279 residues: 2-dehydro-3-deoxyphosphooctonate aldolase (279 aa).

This sequence belongs to the KdsA family.

The protein localises to the cytoplasm. The enzyme catalyses D-arabinose 5-phosphate + phosphoenolpyruvate + H2O = 3-deoxy-alpha-D-manno-2-octulosonate-8-phosphate + phosphate. It functions in the pathway carbohydrate biosynthesis; 3-deoxy-D-manno-octulosonate biosynthesis; 3-deoxy-D-manno-octulosonate from D-ribulose 5-phosphate: step 2/3. It participates in bacterial outer membrane biogenesis; lipopolysaccharide biosynthesis. The polypeptide is 2-dehydro-3-deoxyphosphooctonate aldolase (Azoarcus sp. (strain BH72)).